Reading from the N-terminus, the 264-residue chain is Ribonuclease HII (264 aa).

Residues 69–263 (KVVCGIDEVG…EENAKTITKP (195 aa)) form the RNase H type-2 domain. A divalent metal cation contacts are provided by aspartate 75, glutamate 76, and aspartate 166.

The protein belongs to the RNase HII family. Requires Mn(2+) as cofactor. Mg(2+) is required as a cofactor.

The protein resides in the cytoplasm. The enzyme catalyses Endonucleolytic cleavage to 5'-phosphomonoester.. Endonuclease that specifically degrades the RNA of RNA-DNA hybrids. The sequence is that of Ribonuclease HII from Macrococcus caseolyticus (strain JCSC5402) (Macrococcoides caseolyticum).